The following is a 389-amino-acid chain: S-adenosylmethionine synthase (389 aa).

His-17 provides a ligand contact to ATP. Asp-19 contributes to the Mg(2+) binding site. Glu-45 is a K(+) binding site. L-methionine-binding residues include Glu-58 and Gln-101. The segment at 101 to 111 is flexible loop; sequence QSPDISQGVDG. ATP is bound by residues 170–172, 237–238, Asp-246, 252–253, Ala-269, and Lys-273; these read DSK, RF, and RK. Asp-246 serves as a coordination point for L-methionine. Lys-277 serves as a coordination point for L-methionine.

Belongs to the AdoMet synthase family. As to quaternary structure, homotetramer; dimer of dimers. Requires Mg(2+) as cofactor. K(+) is required as a cofactor.

Its subcellular location is the cytoplasm. The catalysed reaction is L-methionine + ATP + H2O = S-adenosyl-L-methionine + phosphate + diphosphate. It participates in amino-acid biosynthesis; S-adenosyl-L-methionine biosynthesis; S-adenosyl-L-methionine from L-methionine: step 1/1. Its function is as follows. Catalyzes the formation of S-adenosylmethionine (AdoMet) from methionine and ATP. The overall synthetic reaction is composed of two sequential steps, AdoMet formation and the subsequent tripolyphosphate hydrolysis which occurs prior to release of AdoMet from the enzyme. In Treponema denticola (strain ATCC 35405 / DSM 14222 / CIP 103919 / JCM 8153 / KCTC 15104), this protein is S-adenosylmethionine synthase.